Reading from the N-terminus, the 273-residue chain is NADPH-dependent 7-cyano-7-deazaguanine reductase (273 aa).

Residue 80-82 (VES) coordinates substrate. 82–83 (SK) contributes to the NADPH binding site. Cys180 functions as the Thioimide intermediate in the catalytic mechanism. Residue Asp187 is the Proton donor of the active site. Substrate is bound at residue 219–220 (HE). 248–249 (RG) lines the NADPH pocket.

Belongs to the GTP cyclohydrolase I family. QueF type 2 subfamily. As to quaternary structure, homodimer.

It localises to the cytoplasm. The enzyme catalyses 7-aminomethyl-7-carbaguanine + 2 NADP(+) = 7-cyano-7-deazaguanine + 2 NADPH + 3 H(+). It participates in tRNA modification; tRNA-queuosine biosynthesis. In terms of biological role, catalyzes the NADPH-dependent reduction of 7-cyano-7-deazaguanine (preQ0) to 7-aminomethyl-7-deazaguanine (preQ1). This chain is NADPH-dependent 7-cyano-7-deazaguanine reductase, found in Bordetella parapertussis (strain 12822 / ATCC BAA-587 / NCTC 13253).